Consider the following 898-residue polypeptide: DNA-directed DNA polymerase (898 aa).

Positions 101-337 (YDRKFVRVAN…VQAIDKIRGF (237 aa)) are 3'-5'exonuclease. Mg(2+) contacts are provided by aspartate 112, glutamate 114, and aspartate 219. Residues 245 to 261 (VKSKLIQNMYGSKEIYS) are beta hairpin. 3 residues coordinate Mg(2+): aspartate 324, aspartate 408, and leucine 409. The segment at 377–898 (IPQQGSHVKQ…EKASLDFLFG (522 aa)) is polymerase. Substrate is bound by residues 411–413 (SLY), arginine 479, and lysine 557. Aspartate 620 is a binding site for Mg(2+). Residues 702–705 (KKRY) form a binding of DNA in B-conformation region. Residues 893–898 (LDFLFG) are interaction with the polymerase clamp.

The protein belongs to the DNA polymerase type-B family. Interacts with the polymerase clamp; this interaction constitutes the polymerase holoenzyme. Interacts with the helicase assembly factor. Part of the replicase complex that includes the DNA polymerase, the polymerase clamp, the clamp loader complex, the single-stranded DNA binding protein, the primase, the helicase and the helicase assembly factor. Requires Mg(2+) as cofactor.

The enzyme catalyses DNA(n) + a 2'-deoxyribonucleoside 5'-triphosphate = DNA(n+1) + diphosphate. Its function is as follows. Replicates the viral genomic DNA. This polymerase possesses two enzymatic activities: DNA synthesis (polymerase) and an exonucleolytic activity that degrades single-stranded DNA in the 3'- to 5'-direction for proofreading purpose. The polypeptide is DNA-directed DNA polymerase (43) (Enterobacteria phage T4 (Bacteriophage T4)).